Reading from the N-terminus, the 314-residue chain is Aspartate carbamoyltransferase catalytic subunit (314 aa).

Residues Arg-55 and Thr-56 each contribute to the carbamoyl phosphate site. Lys-83 is an L-aspartate binding site. Carbamoyl phosphate is bound by residues Arg-105, His-134, and Gln-137. 2 residues coordinate L-aspartate: Arg-167 and Arg-221. Carbamoyl phosphate-binding residues include Gly-262 and Pro-263.

The protein belongs to the aspartate/ornithine carbamoyltransferase superfamily. ATCase family. Heterododecamer (2C3:3R2) of six catalytic PyrB chains organized as two trimers (C3), and six regulatory PyrI chains organized as three dimers (R2).

The catalysed reaction is carbamoyl phosphate + L-aspartate = N-carbamoyl-L-aspartate + phosphate + H(+). The protein operates within pyrimidine metabolism; UMP biosynthesis via de novo pathway; (S)-dihydroorotate from bicarbonate: step 2/3. Catalyzes the condensation of carbamoyl phosphate and aspartate to form carbamoyl aspartate and inorganic phosphate, the committed step in the de novo pyrimidine nucleotide biosynthesis pathway. In Corynebacterium urealyticum (strain ATCC 43042 / DSM 7109), this protein is Aspartate carbamoyltransferase catalytic subunit.